Here is a 429-residue protein sequence, read N- to C-terminus: UDP-N-acetylglucosamine 1-carboxyvinyltransferase (429 aa).

A phosphoenolpyruvate-binding site is contributed by 22–23 (KN). A UDP-N-acetyl-alpha-D-glucosamine-binding site is contributed by Arg102. Residue Cys126 is the Proton donor of the active site. Cys126 carries the post-translational modification 2-(S-cysteinyl)pyruvic acid O-phosphothioketal. UDP-N-acetyl-alpha-D-glucosamine-binding positions include 171–174 (KVSV), Asp316, and Ile338.

It belongs to the EPSP synthase family. MurA subfamily.

It is found in the cytoplasm. The catalysed reaction is phosphoenolpyruvate + UDP-N-acetyl-alpha-D-glucosamine = UDP-N-acetyl-3-O-(1-carboxyvinyl)-alpha-D-glucosamine + phosphate. Its pathway is cell wall biogenesis; peptidoglycan biosynthesis. Functionally, cell wall formation. Adds enolpyruvyl to UDP-N-acetylglucosamine. This Xanthobacter autotrophicus (strain ATCC BAA-1158 / Py2) protein is UDP-N-acetylglucosamine 1-carboxyvinyltransferase.